The primary structure comprises 123 residues: Small ribosomal subunit protein uS12 (123 aa).

Asp-89 is modified (3-methylthioaspartic acid).

Belongs to the universal ribosomal protein uS12 family. Part of the 30S ribosomal subunit. Contacts proteins S8 and S17. May interact with IF1 in the 30S initiation complex.

With S4 and S5 plays an important role in translational accuracy. Functionally, interacts with and stabilizes bases of the 16S rRNA that are involved in tRNA selection in the A site and with the mRNA backbone. Located at the interface of the 30S and 50S subunits, it traverses the body of the 30S subunit contacting proteins on the other side and probably holding the rRNA structure together. The combined cluster of proteins S8, S12 and S17 appears to hold together the shoulder and platform of the 30S subunit. In Mesorhizobium japonicum (strain LMG 29417 / CECT 9101 / MAFF 303099) (Mesorhizobium loti (strain MAFF 303099)), this protein is Small ribosomal subunit protein uS12.